Here is a 237-residue protein sequence, read N- to C-terminus: 2-C-methyl-D-erythritol 4-phosphate cytidylyltransferase (237 aa).

This sequence belongs to the IspD/TarI cytidylyltransferase family. IspD subfamily.

The catalysed reaction is 2-C-methyl-D-erythritol 4-phosphate + CTP + H(+) = 4-CDP-2-C-methyl-D-erythritol + diphosphate. The protein operates within isoprenoid biosynthesis; isopentenyl diphosphate biosynthesis via DXP pathway; isopentenyl diphosphate from 1-deoxy-D-xylulose 5-phosphate: step 2/6. Catalyzes the formation of 4-diphosphocytidyl-2-C-methyl-D-erythritol from CTP and 2-C-methyl-D-erythritol 4-phosphate (MEP). The polypeptide is 2-C-methyl-D-erythritol 4-phosphate cytidylyltransferase (Paraburkholderia xenovorans (strain LB400)).